The following is a 510-amino-acid chain: DNA-directed RNA polymerase I subunit RPA34 (510 aa).

At M1 the chain carries N-acetylmethionine. A disordered region spans residues 1-31 (MEEPQAGDAARFSCPPNFTAKPPASESPRFS). S27 carries the phosphoserine modification. Phosphotyrosine is present on Y80. The disordered stretch occupies residues 120 to 143 (GPQQSLSGSPLQPIPASPPPQIPP). 4 positions are modified to phosphoserine: S128, S136, S172, and S205. Over residues 131 to 143 (QPIPASPPPQIPP) the composition is skewed to pro residues. Positions 203–510 (LGSPEMDVRK…KRKQQQQQPV (308 aa)) are disordered. A compositionally biased stretch (basic and acidic residues) spans 258–270 (GKETFEPEDKTVK). Residue K270 forms a Glycyl lysine isopeptide (Lys-Gly) (interchain with G-Cter in SUMO1); alternate linkage. Residue K270 forms a Glycyl lysine isopeptide (Lys-Gly) (interchain with G-Cter in SUMO2); alternate linkage. Position 285 is a phosphoserine (S285). Phosphothreonine is present on T287. Residue S309 is modified to Phosphoserine. A Glycyl lysine isopeptide (Lys-Gly) (interchain with G-Cter in SUMO1); alternate cross-link involves residue K314. Residue K314 forms a Glycyl lysine isopeptide (Lys-Gly) (interchain with G-Cter in SUMO2); alternate linkage. 2 stretches are compositionally biased toward low complexity: residues 372–382 (AKPQAQAALAA) and 394–407 (DATV…VGPE). Positions 421–430 (TKKKKKKKER) are enriched in basic residues. The span at 436–452 (EPIQPLEPELPGEGQPE) shows a compositional bias: low complexity. Residue S490 is modified to Phosphoserine.

This sequence belongs to the eukaryotic RPA34 RNA polymerase subunit family. In terms of assembly, component of the RNA polymerase I (Pol I) complex consisting of 13 subunits: a ten-subunit catalytic core composed of POLR1A/RPA1, POLR1B/RPA2, POLR1C/RPAC1, POLR1D/RPAC2, POLR1H/RPA12, POLR2E/RPABC1, POLR2F/RPABC2, POLR2H/RPABC3, POLR2K/RPABC4 and POLR2L/RPABC5; a mobile stalk subunit POLR1F/RPA43 protruding from the core and additional subunits homologous to general transcription factors POLR1E/RPA49 and POLR1G/RPA34. Forms a heterodimer with POLR1E/RPA49. Part of Pol I pre-initiation complex (PIC), in which Pol I core assembles with RRN3 and promoter-bound UTBF and SL1/TIF-IB complex. Interacts with TAF1A thereby associates with the SL1/TIF-IB complex. Interacts with UBTF. Interacts with POLR1E/PRAF1 through its N-terminal region. Interacts with CD3E. In terms of processing, undergoes tyrosine phosphorylation upon T-cell receptor (TCR) stimulation. This phosphorylation has not been confirmed by other groups. Post-translationally, phosphorylated on tyrosine residues in initiation-competent Pol I-beta complexes but not in Pol I-alpha complexes.

The protein localises to the nucleus. The protein resides in the nucleolus. Its subcellular location is the chromosome. Its function is as follows. Component of RNA polymerase I (Pol I), a DNA-dependent RNA polymerase which synthesizes ribosomal RNA precursors using the four ribonucleoside triphosphates as substrates. Involved in UBTF-activated transcription, presumably at a step following PIC formation. Has been described as a component of preformed T-cell receptor (TCR) complex. The sequence is that of DNA-directed RNA polymerase I subunit RPA34 from Homo sapiens (Human).